A 256-amino-acid chain; its full sequence is Large ribosomal subunit protein uL2 (256 aa).

Residues glutamate 208–serine 230 are disordered.

This sequence belongs to the universal ribosomal protein uL2 family. In larvae tissues examined: gut, brain imaginal disk, salivary glands, fat body, muscles, epidermis and trachaea.

It is found in the cytoplasm. This is Large ribosomal subunit protein uL2 (RpL8) from Drosophila melanogaster (Fruit fly).